Here is a 265-residue protein sequence, read N- to C-terminus: tRNA pseudouridine synthase A (265 aa).

D53 (nucleophile) is an active-site residue. Y111 provides a ligand contact to substrate.

Belongs to the tRNA pseudouridine synthase TruA family. Homodimer.

The enzyme catalyses uridine(38/39/40) in tRNA = pseudouridine(38/39/40) in tRNA. Its function is as follows. Formation of pseudouridine at positions 38, 39 and 40 in the anticodon stem and loop of transfer RNAs. In Acinetobacter baumannii (strain ACICU), this protein is tRNA pseudouridine synthase A.